A 93-amino-acid polypeptide reads, in one-letter code: YcgL domain-containing protein VV1058 (93 aa).

In terms of domain architecture, YcgL spans 1 to 84; sequence MLCSIYKSSK…PPENLLQQHK (84 aa). The segment at 74 to 93 is disordered; it reads PPPENLLQQHKERKAQQKND.

This is YcgL domain-containing protein VV1058 from Vibrio vulnificus (strain YJ016).